Consider the following 360-residue polypeptide: Cytochrome b-c1 complex subunit 2, mitochondrial (360 aa).

The N-terminal 15 residues, 1 to 15, are a transit peptide targeting the mitochondrion; sequence MLSSRLQFAQQTARK.

Belongs to the peptidase M16 family. UQCRC2/QCR2 subfamily. In terms of assembly, component of the ubiquinol-cytochrome c oxidoreductase (cytochrome b-c1 complex, complex III, CIII), a multisubunit enzyme composed of 3 respiratory subunits cytochrome b, cytochrome c1 and Rieske protein, 2 core protein subunits, and additional low-molecular weight protein subunits. The complex exists as an obligatory dimer and forms supercomplexes (SCs) in the inner mitochondrial membrane with cytochrome c oxidase (complex IV, CIV).

The protein localises to the mitochondrion inner membrane. Component of the ubiquinol-cytochrome c oxidoreductase, a multisubunit transmembrane complex that is part of the mitochondrial electron transport chain which drives oxidative phosphorylation. The respiratory chain contains 3 multisubunit complexes succinate dehydrogenase (complex II, CII), ubiquinol-cytochrome c oxidoreductase (cytochrome b-c1 complex, complex III, CIII) and cytochrome c oxidase (complex IV, CIV), that cooperate to transfer electrons derived from NADH and succinate to molecular oxygen, creating an electrochemical gradient over the inner membrane that drives transmembrane transport and the ATP synthase. The cytochrome b-c1 complex catalyzes electron transfer from ubiquinol to cytochrome c, linking this redox reaction to translocation of protons across the mitochondrial inner membrane, with protons being carried across the membrane as hydrogens on the quinol. In the process called Q cycle, 2 protons are consumed from the matrix, 4 protons are released into the intermembrane space and 2 electrons are passed to cytochrome c. The sequence is that of Cytochrome b-c1 complex subunit 2, mitochondrial (QCR2) from Kluyveromyces lactis (strain ATCC 8585 / CBS 2359 / DSM 70799 / NBRC 1267 / NRRL Y-1140 / WM37) (Yeast).